The following is an 84-amino-acid chain: Putative pelota-like protein YCL001W-B (84 aa).

It belongs to the eukaryotic release factor 1 family. Pelota subfamily. Highly divergent.

The sequence is that of Putative pelota-like protein YCL001W-B from Saccharomyces cerevisiae (strain ATCC 204508 / S288c) (Baker's yeast).